Here is a 292-residue protein sequence, read N- to C-terminus: ATP synthase gamma chain (292 aa).

The protein belongs to the ATPase gamma chain family. As to quaternary structure, F-type ATPases have 2 components, CF(1) - the catalytic core - and CF(0) - the membrane proton channel. CF(1) has five subunits: alpha(3), beta(3), gamma(1), delta(1), epsilon(1). CF(0) has three main subunits: a, b and c.

The protein localises to the cell membrane. In terms of biological role, produces ATP from ADP in the presence of a proton gradient across the membrane. The gamma chain is believed to be important in regulating ATPase activity and the flow of protons through the CF(0) complex. The sequence is that of ATP synthase gamma chain from Streptococcus pneumoniae serotype 2 (strain D39 / NCTC 7466).